The following is a 154-amino-acid chain: 6,7-dimethyl-8-ribityllumazine synthase (154 aa).

5-amino-6-(D-ribitylamino)uracil contacts are provided by residues W22, 56–58, and 80–82; these read AWE and CVI. 85-86 contributes to the (2S)-2-hydroxy-3-oxobutyl phosphate binding site; it reads DT. Residue H88 is the Proton donor of the active site. N113 is a binding site for 5-amino-6-(D-ribitylamino)uracil. R127 contacts (2S)-2-hydroxy-3-oxobutyl phosphate.

Belongs to the DMRL synthase family. In terms of assembly, forms an icosahedral capsid composed of 60 subunits, arranged as a dodecamer of pentamers.

The enzyme catalyses (2S)-2-hydroxy-3-oxobutyl phosphate + 5-amino-6-(D-ribitylamino)uracil = 6,7-dimethyl-8-(1-D-ribityl)lumazine + phosphate + 2 H2O + H(+). The protein operates within cofactor biosynthesis; riboflavin biosynthesis; riboflavin from 2-hydroxy-3-oxobutyl phosphate and 5-amino-6-(D-ribitylamino)uracil: step 1/2. Functionally, catalyzes the formation of 6,7-dimethyl-8-ribityllumazine by condensation of 5-amino-6-(D-ribitylamino)uracil with 3,4-dihydroxy-2-butanone 4-phosphate. This is the penultimate step in the biosynthesis of riboflavin. In Xanthomonas axonopodis pv. citri (strain 306), this protein is 6,7-dimethyl-8-ribityllumazine synthase.